The chain runs to 73 residues: Putative membrane protein insertion efficiency factor (73 aa).

Belongs to the UPF0161 family.

Its subcellular location is the cell inner membrane. Could be involved in insertion of integral membrane proteins into the membrane. The protein is Putative membrane protein insertion efficiency factor of Rickettsia bellii (strain OSU 85-389).